The primary structure comprises 187 residues: MNLQHHFLIAMPSLQDPHFMRSVIYICEHNKEGAMGLVINKPMEQFTVETVLKKLKISPTPRDPSIRLDKAVLAGGPLAEDRGFILHSPQEGFGSSIPISPDTMITTSKDVLETLGTPEQPKNLLVALGYAGWQQGQLEQELLDNAWLTIEADTHILFNTPIAERWQAAANKLGINIFNIAPQAGHA.

Belongs to the UPF0301 (AlgH) family.

In Yersinia enterocolitica serotype O:8 / biotype 1B (strain NCTC 13174 / 8081), this protein is UPF0301 protein YE3428.